A 212-amino-acid polypeptide reads, in one-letter code: Pyridoxine/pyridoxamine 5'-phosphate oxidase (212 aa).

Substrate is bound by residues 9-12 and K67; that span reads RKSY. FMN-binding positions include 62 to 67, 77 to 78, R83, and K84; these read RIVLIK and FT. Positions 124, 128, and 132 each coordinate substrate. FMN-binding positions include 141-142 and W185; that span reads QS. 191-193 contributes to the substrate binding site; it reads RLH. R195 serves as a coordination point for FMN.

This sequence belongs to the pyridoxamine 5'-phosphate oxidase family. As to quaternary structure, homodimer. Requires FMN as cofactor.

The catalysed reaction is pyridoxamine 5'-phosphate + O2 + H2O = pyridoxal 5'-phosphate + H2O2 + NH4(+). It carries out the reaction pyridoxine 5'-phosphate + O2 = pyridoxal 5'-phosphate + H2O2. The protein operates within cofactor metabolism; pyridoxal 5'-phosphate salvage; pyridoxal 5'-phosphate from pyridoxamine 5'-phosphate: step 1/1. Its pathway is cofactor metabolism; pyridoxal 5'-phosphate salvage; pyridoxal 5'-phosphate from pyridoxine 5'-phosphate: step 1/1. Catalyzes the oxidation of either pyridoxine 5'-phosphate (PNP) or pyridoxamine 5'-phosphate (PMP) into pyridoxal 5'-phosphate (PLP). The polypeptide is Pyridoxine/pyridoxamine 5'-phosphate oxidase (Verminephrobacter eiseniae (strain EF01-2)).